Here is a 368-residue protein sequence, read N- to C-terminus: Protein mab-21-like (368 aa).

This sequence belongs to the mab-21 family.

The protein is Protein mab-21-like of Drosophila melanogaster (Fruit fly).